Reading from the N-terminus, the 143-residue chain is CRISPR-associated endoribonuclease Cas2 (143 aa).

Residue aspartate 14 participates in Mg(2+) binding.

This sequence belongs to the CRISPR-associated endoribonuclease Cas2 protein family. In terms of assembly, homodimer, forms a heterotetramer with a Cas1 homodimer. It depends on Mg(2+) as a cofactor.

CRISPR (clustered regularly interspaced short palindromic repeat), is an adaptive immune system that provides protection against mobile genetic elements (viruses, transposable elements and conjugative plasmids). CRISPR clusters contain sequences complementary to antecedent mobile elements and target invading nucleic acids. CRISPR clusters are transcribed and processed into CRISPR RNA (crRNA). Functions as a ssRNA-specific endoribonuclease. Involved in the integration of spacer DNA into the CRISPR cassette. The chain is CRISPR-associated endoribonuclease Cas2 from Campylobacter jejuni subsp. jejuni serotype O:2 (strain ATCC 700819 / NCTC 11168).